A 351-amino-acid polypeptide reads, in one-letter code: MEENKKTVDGSVDFTEEQEALVVKSWNAMKNNSCDLSLKFFTKILEIAPPAKQMFSFLKDSNVPLEQNPKLKPHAMSVFLMTCESAVQLRKAGKVRVRESNLKKLGATHFKTGVQDEHFEVTKQALLETIEEAIPEMWSLAMKNAWAEAHDQLANAIKVEMKEAHDQMDNANLIINMEENTGSCFTEEQEALVVKSWNAIKYNSGDLSLKFFKKILEIAPPAKQLFSFLKDSNVPLEHNPKLKPHAMSVFLMTCESAVQLRKAGKVTVRESNLKKLGATHFKTGVKDEHFEVTKQALLETIKEALPEMWSPAMENAWGEAHDQLANAIKAEMKKTDHDHQTNVEDKSKPSS.

Globin domains are found at residues 13–162 (DFTE…VEMK) and 184–333 (CFTE…AEMK). Positions 56, 70, 74, 104, 108, 109, 227, 241, 245, 275, 279, and 280 each coordinate heme b. The interval 331 to 351 (EMKKTDHDHQTNVEDKSKPSS) is disordered.

Belongs to the plant globin family. Monomer. Requires heme b as cofactor. In terms of tissue distribution, predominantly expressed in nodules and roots, and, to a lesser extent, in leaves, at low levels in pods, but barely in stems, petioles, buds and flowers. Mainly expressed in nodules and roots at low levels, and barely in leaves. As to expression, expressed at very low levels in nodules, roots and pods.

The protein localises to the cytoplasm. It is found in the nucleus. The catalysed reaction is Fe(III)-heme b-[protein] + nitric oxide + H2O = Fe(II)-heme b-[protein] + nitrite + 2 H(+). Phytoglobin that regulates the fine tuning of nitric oxide (NO) concentration in the cytosol in response to sudden changes in O(2) availability, and performs both symbiotic and nonsymbiotic functions. Exhibits NO dioxygenase activity in the presence of O(2) but nitrite reductase (NiR) activity in the absence of O(2) (e.g. during flooding or in waterlogged soil). May not function as an oxygen storage or transport protein. Extremely reactive toward the physiological ligands O(2), nitric oxide (NO), and nitrite with a very high affinity for O(2) through an hexacoordinate heme iron because of a very low dissociation constant. Functionally, very high affinity for O(2) through two hexacoordinate heme irons. Extremely reactive toward the physiological ligands O(2), nitric oxide (NO), and nitrite. In terms of biological role, very high affinity for O(2) through a single hexacoordinate heme iron. Extremely reactive toward the physiological ligands O(2), nitric oxide (NO), and nitrite. This is Anaerobic nitrite reductase Glb1-2 from Medicago truncatula (Barrel medic).